Reading from the N-terminus, the 898-residue chain is MRKGVPKDPEIADLFYKDDPEEIFVGLHEIGHGSFGAVYFATNSHTNEVVAVKKMSYSGKQTNEKWQDIIKEVKFLQQLKHPNTIEYKGCYLKEHTAWLVMEYCLGSASDMLEVHKKPLQEVEIAAITHGALQGLAYLHSHCKIHRDIKAGNILLTEPGQVKLADFGSASIVSPANSFVGTPYWMAPEVILAMDEGQYDGKVDVWSLGITCIELAERKPPLFNMNAMSALYHIAQNDSPTLQSNEWSDSFRGFVDYCLQKIPQERPSSADLLRHDFVRRDRPPRVLIDLIQRTKDAVRELDNLQYRKMKKILFQETRNGPLTESQEEEEDSEHGSNLSRKMDSLGSNHSIPSMSVSTGSQSSSVSSMQEVLDESSPELVMMHSDESTVNSTSSVVQKKDHVFIRDEVGHRDRRPEVRPTQSVQNQALHYRNRERFATIKSASLVTRQIHEHEQENELREQMSGYKRMRRQHQKQLIALENKLKAEMDEHRLKLQKEVETHANNSSIELEKLAKKQVAVMEKEAKTAAADEKKFQQQILAQQKKDMATFLESQKKQYKLCKEKIKEEMNEDHSTPKKEKQERISKHKENLQHTQAEEEAHLLSQQRLYYDKNCRFFKRKTMIKRHELEQQNIREELNKKRTQKEMEHAMLIRHDESTRELEYRQLHTLQKLRMDLIRLQHQTELENQLEYNKRRERELHRKHFMELRQQPKNLKAMEMQIKKQFQDTCKVQTKQYKALKNHQLEVTPKSEHKTILKSLKDEQTRKLAILAEQYEQSINEMMASQALRRDEAQEAECQALRLQLQQEMELLNAYQSKIKMQTEAQHERELQKLEQRVSLRRAHLEQKIEEELAALQKERSERIKFLLERQEREIETFDMESLRMGFGNLVTLDYPKEDYR.

A Protein kinase domain is found at 24–277 (FVGLHEIGHG…SADLLRHDFV (254 aa)). ATP-binding positions include 30-38 (IGHGSFGAV) and Lys53. The Proton acceptor role is filled by Asp147. The tract at residues 316–374 (TRNGPLTESQEEEEDSEHGSNLSRKMDSLGSNHSIPSMSVSTGSQSSSVSSMQEVLDES) is disordered. Positions 334–351 (GSNLSRKMDSLGSNHSIP) are enriched in polar residues. A compositionally biased stretch (low complexity) spans 352–368 (SMSVSTGSQSSSVSSMQ). Coiled-coil stretches lie at residues 452-502 (EQEN…THAN), 548-649 (FLES…HAML), and 754-875 (LKSL…IETF). A disordered region spans residues 565-596 (EEMNEDHSTPKKEKQERISKHKENLQHTQAEE).

Belongs to the protein kinase superfamily. STE Ser/Thr protein kinase family. STE20 subfamily.

Its subcellular location is the cytoplasm. The protein localises to the cell membrane. It is found in the membrane raft. The protein resides in the lipid droplet. The catalysed reaction is L-seryl-[protein] + ATP = O-phospho-L-seryl-[protein] + ADP + H(+). It catalyses the reaction L-threonyl-[protein] + ATP = O-phospho-L-threonyl-[protein] + ADP + H(+). Functionally, serine/threonine-protein kinase that acts as a regulator of the p38/MAPK14 stress-activated MAPK cascade and of the MAPK8/JNK cascade. In response to DNA damage, involved in the G2/M transition DNA damage checkpoint by activating the p38/MAPK14 stress-activated MAPK cascade, probably by mediating phosphorylation of upstream MAP kinase kinases. Inhibits basal activity of the MAPK8/JNK cascade. The polypeptide is Serine/threonine-protein kinase TAO3 (TAOK3) (Gallus gallus (Chicken)).